Consider the following 115-residue polypeptide: MRYVASYLLAALGGNTSPSAKDIKKILDSVGIEADDDRLDKVISELNGKNIEDVIAQGIGKLASVPAGGAVAVSAAPGSAAPAAGSAPAAAEERKEEKKEESEESDDDMGFGLFD.

Methionine 1 carries the N-acetylmethionine modification. Phosphoserine is present on residues serine 17 and serine 19. Lysine 21 carries the post-translational modification N6-acetyllysine; alternate. Lysine 21 carries the post-translational modification N6-succinyllysine; alternate. Residues 76–90 (APGSAAPAAGSAPAA) show a composition bias toward low complexity. Residues 76-115 (APGSAAPAAGSAPAAAEERKEEKKEESEESDDDMGFGLFD) are disordered. Residues serine 79 and serine 86 each carry the phosphoserine modification. The segment covering 91–101 (AEERKEEKKEE) has biased composition (basic and acidic residues). Phosphoserine occurs at positions 102 and 105.

Belongs to the eukaryotic ribosomal protein P1/P2 family. Heterodimer with RPLP1 at the lateral ribosomal stalk of the large ribosomal subunit.

Functionally, plays an important role in the elongation step of protein synthesis. This is Large ribosomal subunit protein P2 (RPLP2) from Equus caballus (Horse).